A 314-amino-acid chain; its full sequence is Melanoma-associated antigen 12 (314 aa).

Residues 1–14 are compositionally biased toward basic and acidic residues; it reads MPLEQRSQHCKPEE. Residues 1–72 form a disordered region; that stretch reads MPLEQRSQHC…HSPQGASTLP (72 aa). The span at 17–44 shows a compositional bias: low complexity; it reads EAQGEALGLVGAQAPATEEQETASSSST. One can recognise an MAGE domain in the interval 109–308; sequence LSRKMAELVH…ISYPPLHEWA (200 aa).

As to expression, expressed in many tumors of several types, such as melanoma, head and neck squamous cell carcinoma, lung carcinoma and breast carcinoma, but not in normal tissues except for testes.

Its function is as follows. Not known, though may play a role tumor transformation or progression. In vitro promotes cell viability in melanoma cell lines. The protein is Melanoma-associated antigen 12 (MAGEA12) of Homo sapiens (Human).